Here is a 361-residue protein sequence, read N- to C-terminus: uncharacterized protein (361 aa).

The first 19 residues, 1–19, serve as a signal peptide directing secretion; sequence MNLVICVLLLSIWKNNCMT. Topologically, residues 20-47 are extracellular; sequence TNQTNGSSTTGDKPVESMQTKLNYLRRN. The N-linked (GlcNAc...) asparagine glycan is linked to asparagine 24. The chain crosses the membrane as a helical span at residues 48–68; the sequence is LLILVGIIIMVFVFICFCYLH. At 69-361 the chain is on the cytoplasmic side; that stretch reads YNCLSDDASK…QVTSEVTLND (293 aa). The span at 99-113 shows a compositional bias: polar residues; sequence AKTASQCSPETQPML. Disordered stretches follow at residues 99–184, 209–247, and 295–316; these read AKTA…KAHK, PPQL…NPKR, and QNLH…LDSR. A compositionally biased stretch (low complexity) spans 114–133; it reads STADKSSDSSSPERASAQSS. The span at 141–150 shows a compositional bias: polar residues; the sequence is SSLQKPSIPN. Over residues 299–308 the composition is skewed to low complexity; the sequence is VSSKVKSSSR.

Its subcellular location is the membrane. This is an uncharacterized protein from Homo sapiens (Human).